Here is a 105-residue protein sequence, read N- to C-terminus: Phosphoribosyl-ATP pyrophosphatase (105 aa).

The protein belongs to the PRA-PH family.

It localises to the cytoplasm. It carries out the reaction 1-(5-phospho-beta-D-ribosyl)-ATP + H2O = 1-(5-phospho-beta-D-ribosyl)-5'-AMP + diphosphate + H(+). It functions in the pathway amino-acid biosynthesis; L-histidine biosynthesis; L-histidine from 5-phospho-alpha-D-ribose 1-diphosphate: step 2/9. This is Phosphoribosyl-ATP pyrophosphatase from Vesicomyosocius okutanii subsp. Calyptogena okutanii (strain HA).